A 426-amino-acid polypeptide reads, in one-letter code: UDP-N-acetylglucosamine 1-carboxyvinyltransferase (426 aa).

K22–N23 provides a ligand contact to phosphoenolpyruvate. Residue R94 participates in UDP-N-acetyl-alpha-D-glucosamine binding. Catalysis depends on C118, which acts as the Proton donor. Residue C118 is modified to 2-(S-cysteinyl)pyruvic acid O-phosphothioketal. UDP-N-acetyl-alpha-D-glucosamine contacts are provided by residues R123–L127, D310, and I332.

It belongs to the EPSP synthase family. MurA subfamily.

Its subcellular location is the cytoplasm. It catalyses the reaction phosphoenolpyruvate + UDP-N-acetyl-alpha-D-glucosamine = UDP-N-acetyl-3-O-(1-carboxyvinyl)-alpha-D-glucosamine + phosphate. It participates in cell wall biogenesis; peptidoglycan biosynthesis. In terms of biological role, cell wall formation. Adds enolpyruvyl to UDP-N-acetylglucosamine. In Hyphomonas neptunium (strain ATCC 15444), this protein is UDP-N-acetylglucosamine 1-carboxyvinyltransferase.